The chain runs to 402 residues: C2H2 finger domain transcription factor CON7 (402 aa).

A disordered region spans residues 1–247 (MLASSRQPRH…GAQQHKRPRR (247 aa)). Composition is skewed to polar residues over residues 19-49 (LSSSTLHRSGSPQTGTLRQDATTPTLATSVG) and 72-86 (CGDNQSEAQSVTVDT). A compositionally biased stretch (low complexity) spans 87-98 (SSAAQYNASAQQ). Composition is skewed to polar residues over residues 99–116 (EVRSNNPGNYSASATPTS) and 125–151 (ARSSSFPDHLQQRSYHPASNHSGSSGD). The C2H2-type zinc finger occupies 256 to 282 (YKCGWQGCEKAYGTLNHLNAHVTMQSH). The stretch at 289–323 (EEFKEIRKEWKARKKEEEAARKADEERQRQAAQSQ) forms a coiled coil. Positions 302 to 317 (KKEEEAARKADEERQR) are enriched in basic and acidic residues. Residues 302 to 402 (KKEEEAARKA…GSNQAMYNQR (101 aa)) are disordered. Polar residues-rich tracts occupy residues 322 to 341 (SQGGSTEGQAGSDVSQSSNG), 363 to 373 (AATSTSVQQQP), and 392 to 402 (GGSNQAMYNQR).

It is found in the nucleus. Transcription factor that plays a central role in appressorium formation and pathogenicity. Required for the expression of a large set of genes including factors that might play a role in membrane metabolism and ergosterol biosynthesis, the chitin-binding protein CBP1,as well as CHS7 that is essential for normal pathogenic development. The chain is C2H2 finger domain transcription factor CON7 from Pyricularia oryzae (strain 70-15 / ATCC MYA-4617 / FGSC 8958) (Rice blast fungus).